A 318-amino-acid polypeptide reads, in one-letter code: DNA repair nuclease/redox regulator APEX1 (318 aa).

Residues 1–33 (MPKRGKKGAVAEDGDELKTEPEAKKSKTTAKKN) form a necessary for interaction with YBX1, binding to RNA, association together with NPM1 to rRNA, endoribonuclease activity on abasic RNA and localization in the nucleoli region. The tract at residues 1–60 (MPKRGKKGAVAEDGDELKTEPEAKKSKTTAKKNDKEAAGEGPALYEDPPDQKTSPSGKPA) is disordered. Residues Lys6 and Lys7 each carry the N6-acetyllysine; by EP300 modification. The Nuclear localization signal (NLS) signature appears at 8-13 (GAVAED). Over residues 16 to 38 (ELKTEPEAKKSKTTAKKNDKEAA) the composition is skewed to basic and acidic residues. The interval 23 to 33 (AKKSKTTAKKN) is necessary for interaction with NPM1 and for efficient rRNA binding. 4 positions are modified to N6-acetyllysine: Lys27, Lys31, Lys32, and Lys35. Ser54 carries the post-translational modification Phosphoserine. The Nuclear export signal (NES) signature appears at 64–80 (ICSWNVDGLRAWIKKKG). Cys65 is modified (S-nitrosocysteine; alternate). A disulfide bridge links Cys65 with Cys93. Position 70 (Asp70) interacts with Mg(2+). Cys93 carries the S-nitrosocysteine; alternate modification. A Mg(2+)-binding site is contributed by Glu96. Residue Tyr171 is part of the active site. Lys197 is modified (N6-acetyllysine). 2 residues coordinate Mg(2+): Asp210 and Asn212. The active-site Proton donor/acceptor is Asp210. Thr233 is subject to Phosphothreonine; by CDK5. The segment at 289–318 (HSLLTALCDSKIRSKALGSDHCPITLYLAL) is mitochondrial targeting sequence (MTS). Asp308 provides a ligand contact to Mg(2+). Cys310 bears the S-nitrosocysteine mark.

This sequence belongs to the DNA repair enzymes AP/ExoA family. Monomer. Homodimer; disulfide-linked. Component of the SET complex, composed of at least APEX1, SET, ANP32A, HMGB2, NME1 and TREX1. Associates with the dimer XRCC5/XRCC6 in a DNA-dependent manner. Interacts with SIRT1; the interaction is increased in the context of genotoxic stress. Interacts with HDAC1, HDAC2 and HDAC3; the interactions are not dependent on the APEX1 acetylation status. Interacts with XRCC1; the interaction is induced by SIRT1 and increased with the APEX1 acetylated form. Interacts with NPM1 (via N-terminal domain); the interaction is RNA-dependent and decreases in hydrogen peroxide-damaged cells. Interacts (via N-terminus) with YBX1 (via C-terminus); the interaction is increased in presence of APEX1 acetylated at Lys-6 and Lys-7. Interacts with HNRNPL; the interaction is DNA-dependent. Interacts (via N-terminus) with KPNA1 and KPNA2. Interacts with TXN; the interaction stimulates the FOS/JUN AP-1 complex DNA-binding activity in a redox-dependent manner. Interacts with GZMA, KRT8, MDM2, POLB, PRDX6, PRPF19, RPLP0, TOMM20 and WDR77. Binds to CDK5. Mg(2+) is required as a cofactor. The cofactor is Mn(2+). In terms of processing, phosphorylated. Phosphorylation by kinase PKC or casein kinase CK2 results in enhanced redox activity that stimulates binding of the FOS/JUN AP-1 complex to its cognate binding site. AP-endodeoxyribonuclease activity is not affected by CK2-mediated phosphorylation. Phosphorylation of Thr-233 by CDK5 in response to MPP(+)/MPTP (1-methyl-4-phenylpyridinium) reduces AP-endodeoxyribonuclease activity resulting in accumulation of DNA damage and contributing to neuronal death. Acetylated on Lys-6 and Lys-7. Acetylation is increased by the transcriptional coactivator EP300 acetyltransferase, genotoxic agents like H(2)O(2) and methyl methanesulfonate (MMS). Acetylation increases its binding affinity to the negative calcium response element (nCaRE) DNA promoter. The acetylated form induces a stronger binding of YBX1 to the Y-box sequence in the MDR1 promoter than the unacetylated form. Deacetylated on lysines. Lys-6 and Lys-7 are deacetylated by SIRT1. Post-translationally, cleaved at Lys-31 by granzyme A to create the mitochondrial form; leading in reduction of binding to DNA, AP endodeoxyribonuclease activity, redox activation of transcription factors and to enhanced cell death. Cleaved by granzyme K; leading to intracellular ROS accumulation and enhanced cell death after oxidative stress. In terms of processing, cys-69 and Cys-93 are nitrosylated in response to nitric oxide (NO) and lead to the exposure of the nuclear export signal (NES). Ubiquitinated by MDM2; leading to translocation to the cytoplasm and proteasomal degradation.

It localises to the nucleus. It is found in the nucleolus. The protein localises to the nucleus speckle. Its subcellular location is the endoplasmic reticulum. The protein resides in the cytoplasm. It localises to the mitochondrion. It carries out the reaction a deoxyribonucleotide-2'-deoxyribose-5'-monophosphate-DNA + H2O = a 5'-end 2'-deoxyribose-5'-monophosphate-DNA + a 3'-end 2'-deoxyribonucleotide-DNA + H(+). It catalyses the reaction Exonucleolytic cleavage in the 3'- to 5'-direction to yield nucleoside 5'-phosphates.. The enzyme catalyses a 3'-end 2'-deoxyribonucleotide-3'-phosphoglycolate-DNA + H2O = 2-phosphoglycolate + a 3'-end 2'-deoxyribonucleotide-DNA + H(+). The catalysed reaction is a 3'-end 2'-deoxyribonucleotide-8-oxoguanine-DNA + H2O = 8-oxo-dGMP + a 3'-end 2'-deoxyribonucleotide-DNA + H(+). Its activity is regulated as follows. NPM1 stimulates endodeoxyribonuclease activity on double-stranded DNA with AP sites, but inhibits endoribonuclease activity on single-stranded RNA containing AP sites. Multifunctional protein that plays a central role in the cellular response to oxidative stress. The two major activities of APEX1 are DNA repair and redox regulation of transcriptional factors. Functions as an apurinic/apyrimidinic (AP) endodeoxyribonuclease in the base excision repair (BER) pathway of DNA lesions induced by oxidative and alkylating agents. Initiates repair of AP sites in DNA by catalyzing hydrolytic incision of the phosphodiester backbone immediately adjacent to the damage, generating a single-strand break with 5'-deoxyribose phosphate and 3'-hydroxyl ends. Also incises at AP sites in the DNA strand of DNA/RNA hybrids, single-stranded DNA regions of R-loop structures, and single-stranded RNA molecules. Operates at switch sites of immunoglobulin (Ig) constant regions where it mediates Ig isotype class switch recombination. Processes AP sites induced by successive action of AICDA and UNG. Generates staggered nicks in opposite DNA strands resulting in the formation of double-strand DNA breaks that are finally resolved via non-homologous end joining repair pathway. Has 3'-5' exodeoxyribonuclease activity on mismatched deoxyribonucleotides at the 3' termini of nicked or gapped DNA molecules during short-patch BER. Possesses DNA 3' phosphodiesterase activity capable of removing lesions (such as phosphoglycolate and 8-oxoguanine) blocking the 3' side of DNA strand breaks. Also acts as an endoribonuclease involved in the control of single-stranded RNA metabolism. Plays a role in regulating MYC mRNA turnover by preferentially cleaving in between UA and CA dinucleotides of the MYC coding region determinant (CRD). In association with NMD1, plays a role in the rRNA quality control process during cell cycle progression. Acts as a loading factor for POLB onto non-incised AP sites in DNA and stimulates the 5'-terminal deoxyribose 5'-phosphate (dRp) excision activity of POLB. Exerts reversible nuclear redox activity to regulate DNA binding affinity and transcriptional activity of transcriptional factors by controlling the redox status of their DNA-binding domain, such as the FOS/JUN AP-1 complex after exposure to IR. Involved in calcium-dependent down-regulation of parathyroid hormone (PTH) expression by binding to negative calcium response elements (nCaREs). Together with HNRNPL or the dimer XRCC5/XRCC6, associates with nCaRE, acting as an activator of transcriptional repression. May also play a role in the epigenetic regulation of gene expression by participating in DNA demethylation. Stimulates the YBX1-mediated MDR1 promoter activity, when acetylated at Lys-6 and Lys-7, leading to drug resistance. Plays a role in protection from granzyme-mediated cellular repair leading to cell death. Binds DNA and RNA. Associates, together with YBX1, on the MDR1 promoter. Together with NPM1, associates with rRNA. The polypeptide is DNA repair nuclease/redox regulator APEX1 (APEX1) (Pongo pygmaeus (Bornean orangutan)).